A 919-amino-acid chain; its full sequence is Glutamate receptor ionotropic, kainate 3 (919 aa).

Residues 1 to 31 (MTAPWRRLRSLVWEYWAGLLVCAFWIPDSRG) form the signal peptide. At 32–563 (MPHVIRIGGI…VFSFLNPLSP (532 aa)) the chain is on the extracellular side. N-linked (GlcNAc...) asparagine glycosylation is found at Asn70, Asn76, Asn278, Asn381, Asn415, Asn426, and Asn433. Cysteines 99 and 350 form a disulfide. Residues Pro518, Thr520, and Arg525 each coordinate L-glutamate. N-linked (GlcNAc...) asparagine glycosylation is found at Asn548 and Asn551. A helical membrane pass occupies residues 564–584 (DIWMYVLLAYLGVSCVLFVIA). The Cytoplasmic segment spans residues 585 to 636 (RFSPYEWYDAHPCNPGSEVVENNFTLLNSFWFGMGSLMQQGSELMPKALSTR). The chain crosses the membrane as a helical span at residues 637-657 (IIGGIWWFFTLIIISSYTANL). Residues 658 to 820 (AAFLTVERME…KEASALGIQK (163 aa)) are Extracellular-facing. Ala691, Thr692, and Glu739 together coordinate L-glutamate. Asn752 carries an N-linked (GlcNAc...) asparagine glycan. A helical transmembrane segment spans residues 821 to 841 (IGGIFIVLAAGLVLSVLVAVG). The Cytoplasmic portion of the chain corresponds to 842 to 919 (EFVYKLRKTA…CSTSLAPVFP (78 aa)). Phosphoserine is present on Ser869. Lys887 is covalently cross-linked (Glycyl lysine isopeptide (Lys-Gly) (interchain with G-Cter in SUMO1)).

This sequence belongs to the glutamate-gated ion channel (TC 1.A.10.1) family. GRIK3 subfamily. In terms of assembly, homotetramer, and heterotetramer with either GRIK4 or GRIK5. Can form functional heteromeric receptors with GRIK2. Interacts with PRKCABP. Interacts with NETO2.

The protein localises to the cell membrane. It localises to the postsynaptic cell membrane. The enzyme catalyses Ca(2+)(in) = Ca(2+)(out). Functionally, ionotropic glutamate receptor that functions as a cation-permeable ligand-gated ion channel, gated by L-glutamate and the glutamatergic agonist kainic acid. Binding of the excitatory neurotransmitter L-glutamate induces a conformation change, leading to the opening of the cation channel, and thereby converts the chemical signal to an electrical impulse. The receptor then desensitizes rapidly and enters a transient inactive state, characterized by the presence of bound agonist. In association with GRIK2, involved in presynaptic facilitation of glutamate release at hippocampal mossy fiber synapses. The chain is Glutamate receptor ionotropic, kainate 3 (GRIK3) from Homo sapiens (Human).